Here is a 542-residue protein sequence, read N- to C-terminus: Carboxypeptidase Y (542 aa).

An N-terminal signal peptide occupies residues 1 to 21 (MKLSKSTLIATLALTATSTNA). The propeptide occupies 22–127 (LVVQNPFSNI…DAQVPNHKLR (106 aa)). Disulfide bonds link cysteine 182-cysteine 421, cysteine 316-cysteine 330, cysteine 340-cysteine 363, cysteine 347-cysteine 356, and cysteine 385-cysteine 391. A glycan (N-linked (GlcNAc...) asparagine) is linked at asparagine 213. The active site involves serine 269. N-linked (GlcNAc...) asparagine glycosylation is present at asparagine 291. Aspartate 461 is an active-site residue. Cysteine 464 contacts substrate. The active site involves histidine 518. Methionine 519 is a binding site for substrate.

Belongs to the peptidase S10 family.

Its subcellular location is the vacuole. It catalyses the reaction Release of a C-terminal amino acid with broad specificity.. Its function is as follows. Involved in degradation of small peptides. This chain is Carboxypeptidase Y (CPY1), found in Candida albicans (Yeast).